The primary structure comprises 186 residues: Superoxide dismutase [Cu-Zn] (186 aa).

Residues 1-20 form the signal peptide; sequence MKKTVLALMFSCGMVASAFA. His79, His81, and His104 together coordinate Cu cation. Cys86 and Cys182 are joined by a disulfide. 4 residues coordinate Zn(2+): His104, His113, His122, and Asp125. A Cu cation-binding site is contributed by His160.

Belongs to the Cu-Zn superoxide dismutase family. Homodimer. Requires Cu cation as cofactor. It depends on Zn(2+) as a cofactor.

It is found in the periplasm. It carries out the reaction 2 superoxide + 2 H(+) = H2O2 + O2. In terms of biological role, destroys radicals which are normally produced within the cells and which are toxic to biological systems. The protein is Superoxide dismutase [Cu-Zn] (sodC) of Pasteurella multocida (strain Pm70).